Consider the following 260-residue polypeptide: Chloride intracellular channel Clic (260 aa).

Residues 42–66 (FCQEYFMDLYLLAELKTISLKVTTV) form a helical membrane-spanning segment.

Belongs to the chloride channel CLIC family. Expressed in cardiac tubes.

Its subcellular location is the mitochondrion. It is found in the membrane. In terms of biological role, might insert into membranes and form chloride ion channels. Channel activity depends on the pH. May play a role in ethanol sensitivity. The polypeptide is Chloride intracellular channel Clic (Drosophila melanogaster (Fruit fly)).